The sequence spans 522 residues: DNA-binding protein Ikaros (522 aa).

Disordered regions lie at residues methionine 1–arginine 48 and alanine 96–alanine 115. C2H2-type zinc fingers lie at residues leucine 125–histidine 147, phenylalanine 153–histidine 175, phenylalanine 181–histidine 203, and histidine 209–histidine 232. A disordered region spans residues lysine 379–lysine 406. 2 consecutive C2H2-type zinc fingers follow at residues tyrosine 468 to histidine 490 and phenylalanine 496 to histidine 520.

The protein belongs to the Ikaros C2H2-type zinc-finger protein family. Expression mainly limited to thymus, spleen and pronephros. Very low expression in liver. No expression in testis, brain, eye and muscle.

It is found in the nucleus. Functionally, binds and activates the enhancer (delta-A element) of the CD3-delta gene. Functions in the specification and the maturation of the T-lymphocyte. Also interacts with a critical control element in the TDT (terminal deoxynucleotidyltransferase) promoter as well as with the promoters for other genes expressed during early stages of B- and T-cell development. Function is isoform-specific and is modulated by dominant-negative inactive isoforms. This Oncorhynchus mykiss (Rainbow trout) protein is DNA-binding protein Ikaros (ikzf1).